Here is a 98-residue protein sequence, read N- to C-terminus: Small ribosomal subunit protein bS18 (98 aa).

This sequence belongs to the bacterial ribosomal protein bS18 family. Part of the 30S ribosomal subunit. Forms a tight heterodimer with protein bS6.

Functionally, binds as a heterodimer with protein bS6 to the central domain of the 16S rRNA, where it helps stabilize the platform of the 30S subunit. The protein is Small ribosomal subunit protein bS18 of Flavobacterium psychrophilum (strain ATCC 49511 / DSM 21280 / CIP 103535 / JIP02/86).